A 365-amino-acid polypeptide reads, in one-letter code: MSGNTFGTLFTVTTFGESHGPAIGCVIDGCPPGMVLSEVDIQPELDRRKPGTSRHVTQRQESDTVEILSGVYQGKTTGTPIALLIRNEDQRSKDYGNITETFRPGHADYTYWHKYGIRDPRGGGRSSARLTAPVVGAGAIAKKWLFEKYGTTFKGCMSQLGDIEIPFEDWRHVTENPFFSANASILPQLEAYMDDLRKNGDSCGARIDVVAENVPVGLGEPIYDKLDAEIAFALMGINAVKGVEIGAGFKSVAQKGTEHGDELTPEGFATNHSGGILGGISTGQNITASIAIKPTSSIRTARHSIDKAGNPVMVETLGRHDPCVGIRATPIAESMLALVLMDHALRHRAQCGDVVVTPPPIPGSR.

Arg-48 and Arg-54 together coordinate NADP(+). Residues Arg-125 to Ser-127, Asn-238 to Ala-239, Gly-278, Lys-293 to Ser-297, and Arg-319 each bind FMN.

This sequence belongs to the chorismate synthase family. Homotetramer. FMNH2 serves as cofactor.

The catalysed reaction is 5-O-(1-carboxyvinyl)-3-phosphoshikimate = chorismate + phosphate. It functions in the pathway metabolic intermediate biosynthesis; chorismate biosynthesis; chorismate from D-erythrose 4-phosphate and phosphoenolpyruvate: step 7/7. Functionally, catalyzes the anti-1,4-elimination of the C-3 phosphate and the C-6 proR hydrogen from 5-enolpyruvylshikimate-3-phosphate (EPSP) to yield chorismate, which is the branch point compound that serves as the starting substrate for the three terminal pathways of aromatic amino acid biosynthesis. This reaction introduces a second double bond into the aromatic ring system. This is Chorismate synthase from Janthinobacterium sp. (strain Marseille) (Minibacterium massiliensis).